The sequence spans 450 residues: MKRRYFGTDGIRGQSNIYPMTPDLAMRVGIAAGTIFHRGSHRHRVVIGKDTRLSGYMLENAMVAGFTAAGVDAFVLGPIPTPAVAMLTRSLRADIGVMISASHNPYEDNGIKLFGPDGYKLSDDLEMKIEDLLEKDMTAHLAKSENIGRAKRVDGVHDRYIEHAKRTLPRDVTLQGLRIAIDCANGAAYKVAPAVLWELGAEVVTIGNEPNGTNINLNCGSTSPVALQKKVDEVRADIGIALDGDADRVIIVDETGTIIDGDQLMAVIAESWAENQSLRGNGIVATVMSNLGLERFLEDRGMALARTAVGDRHVVEHMRQHNFNVGGEQSGHIVLSDYGTTGDGLVAALQILAVVKRTGKPVSEVCRRFEPVPQLLRNVRISGGKPLEDNQVRKAIADAESELARNGRLVIRPSGTEPLIRVMAEGDDRGQIERIVGGLIDVISSVRNAA.

Catalysis depends on serine 102, which acts as the Phosphoserine intermediate. Positions 102, 243, 245, and 247 each coordinate Mg(2+). Serine 102 is subject to Phosphoserine.

Belongs to the phosphohexose mutase family. Mg(2+) serves as cofactor. In terms of processing, activated by phosphorylation.

The catalysed reaction is alpha-D-glucosamine 1-phosphate = D-glucosamine 6-phosphate. Functionally, catalyzes the conversion of glucosamine-6-phosphate to glucosamine-1-phosphate. This is Phosphoglucosamine mutase from Rhizobium rhizogenes (strain K84 / ATCC BAA-868) (Agrobacterium radiobacter).